Here is a 144-residue protein sequence, read N- to C-terminus: MKKVAGIVKLQLPAGKATPAPPVGPALGQYGANIMEFTKAFNAQTADKGDAIIPVEITIYADRSFTFITKTPPMSYLIRKAAGIGKGSSTPNKAKVGKLNWDQVLEIAKTKMPDLNAGSVEAAANTVAGTARSMGVTVEGGPNA.

It belongs to the universal ribosomal protein uL11 family. In terms of assembly, part of the ribosomal stalk of the 50S ribosomal subunit. Interacts with L10 and the large rRNA to form the base of the stalk. L10 forms an elongated spine to which L12 dimers bind in a sequential fashion forming a multimeric L10(L12)X complex. Contacts the CTC protein (RL25). In terms of processing, one or more lysine residues are methylated.

Functionally, forms part of the ribosomal stalk which helps the ribosome interact with GTP-bound translation factors. This Deinococcus radiodurans (strain ATCC 13939 / DSM 20539 / JCM 16871 / CCUG 27074 / LMG 4051 / NBRC 15346 / NCIMB 9279 / VKM B-1422 / R1) protein is Large ribosomal subunit protein uL11.